A 590-amino-acid chain; its full sequence is Muscarinic acetylcholine receptor M3 (590 aa).

Residues 1-67 (MTLHNNSTTS…DPLGGHTVWQ (67 aa)) are Extracellular-facing. N-linked (GlcNAc...) asparagine glycosylation is found at asparagine 5, asparagine 6, asparagine 15, asparagine 41, and asparagine 48. The chain crosses the membrane as a helical span at residues 68-91 (VVFIAFLTGILALVTIIGNILVIV). Residues 92–104 (SFKVNKQLKTVNN) lie on the Cytoplasmic side of the membrane. A helical membrane pass occupies residues 105 to 130 (YFLLSLACADLIIGVISMNLFTTYII). At 131–142 (MNRWALGNLACD) the chain is on the extracellular side. Cysteine 141 and cysteine 221 are joined by a disulfide. Residues 143-164 (LWLAIDYVASNASVMNLLVISF) form a helical membrane-spanning segment. Residues 165–184 (DRYFSITRPLTYRAKRTTKR) lie on the Cytoplasmic side of the membrane. The chain crosses the membrane as a helical span at residues 185 to 206 (AGVMIGLAWVISFVLWAPAILF). At 207 to 229 (WQYFVGKRTVPPGECFIQFLSEP) the chain is on the extracellular side. A helical transmembrane segment spans residues 230 to 252 (TITFGTAIAAFYMPVTIMTILYW). At 253–491 (RIYKETEKRT…SLVKEKKAAQ (239 aa)) the chain is on the cytoplasmic side. Positions 275–281 (AETENFV) match the Basolateral sorting signal motif. Residues 323 to 357 (SSEQMDQDHSSSDSWNNNDAAASLENSASSDEEDI) are disordered. The segment covering 334–345 (SDSWNNNDAAAS) has biased composition (low complexity). Residue serine 385 is modified to Phosphoserine. The helical transmembrane segment at 492-514 (TLSAILLAFIITWTPYNIMVLVN) threads the bilayer. At 515–526 (TFCDSCIPKTFW) the chain is on the extracellular side. Cysteine 517 and cysteine 520 are oxidised to a cystine. A helical membrane pass occupies residues 527 to 546 (NLGYWLCYINSTVNPVCYAL). Over 547 to 590 (CNKTFRTTFKMLLLCQCGKKKRRKQQYQQRQSVIFHKRAPEQAL) the chain is Cytoplasmic.

The protein belongs to the G-protein coupled receptor 1 family. Muscarinic acetylcholine receptor subfamily. CHRM3 sub-subfamily. In terms of assembly, homodimer; the dimers can form tetramers. Interacts with NALCN. Interacts with TMEM147.

It localises to the cell membrane. Its subcellular location is the postsynaptic cell membrane. The protein localises to the basolateral cell membrane. It is found in the endoplasmic reticulum membrane. Its function is as follows. The muscarinic acetylcholine receptor mediates various cellular responses, including inhibition of adenylate cyclase, breakdown of phosphoinositides and modulation of potassium channels through the action of G proteins. Primary transducing effect is Pi turnover. The protein is Muscarinic acetylcholine receptor M3 (CHRM3) of Gorilla gorilla gorilla (Western lowland gorilla).